The following is a 234-amino-acid chain: Biotin transport ATP-binding protein BioM (234 aa).

The ABC transporter domain occupies 1-230; the sequence is MQAIDIGHVT…YIAAMQALAR (230 aa). 35-42 contributes to the ATP binding site; that stretch reads GRNGAGKS.

The protein belongs to the ABC transporter superfamily. Part of a biotin transporter holocomplex composed of BioM, BioN and BioY. BioMN complexes can be readily purified, but not BioMY complexes. Only the BioMNY complex has ATPase activity.

It is found in the cell inner membrane. Required for biotin uptake under very low (pM) biotin concentrations but not under higher (nM) concentrations. The sequence is that of Biotin transport ATP-binding protein BioM (bioM) from Rhodobacter capsulatus (strain ATCC BAA-309 / NBRC 16581 / SB1003).